The chain runs to 2718 residues: Zinc finger protein 40 (2718 aa).

Disordered stretches follow at residues 58–182 (HLKK…CISS), 210–256 (LSQK…AESQ), and 335–373 (GLTSPSSRSQVTPQNQQMDSASPLSISPANSTQSPPMPI). S141 carries the phosphoserine modification. Basic and acidic residues predominate over residues 142-158 (ELRRWRSEGADPAKFSD). 2 stretches are compositionally biased toward polar residues: residues 164–182 (DSSSLSSKTRTDNSECISS) and 237–256 (KNSSMDAPNQTSQELVAESQ). The segment at 406-428 (YICEYCNRACAKPSVLLKHIRSH) adopts a C2H2-type 1 zinc-finger fold. A Phosphothreonine modification is found at T429. Residues 434–456 (YPCVTCGFSFKTKSNLYKHKKSH) form a C2H2-type 2 zinc finger. Phosphoserine occurs at positions 476, 479, 492, 495, 571, and 577. The disordered stretch occupies residues 484-511 (SIHSDVEDSGESEEEGATDERQHDLGAM). Over residues 490–500 (EDSGESEEEGA) the composition is skewed to acidic residues. A disordered region spans residues 574-727 (RTDSPKAMDP…TPSALPTGEK (154 aa)). The span at 576-585 (DSPKAMDPKP) shows a compositional bias: basic and acidic residues. The segment covering 588-612 (SSAQKQKDLQVTNVQPLSANMSQGG) has biased composition (polar residues). The segment covering 617–626 (ETNENSHQKG) has biased composition (basic and acidic residues). Composition is skewed to polar residues over residues 644–687 (AQLQ…QTVS) and 698–721 (STEQDSGRSNGPSAALVTTSTPSA). S670 and S681 each carry phosphoserine. Residues 956-986 (GTMFECETCRNRYRKLENFENHKKFYCSELH) form a CCHC HIVEP-type zinc finger. The segment at 1022 to 1062 (WEQTPQIRKRRKMKSVGDDEELQQNESGTSPKSSEGLQFQN) is disordered. Phosphoserine occurs at positions 1036, 1051, 1091, 1158, 1161, and 1180. Polar residues predominate over residues 1045–1062 (QNESGTSPKSSEGLQFQN). A disordered region spans residues 1138 to 1169 (HTNSLSRPNSFDKPEPFERASPVSFQELNRTG). A compositionally biased stretch (polar residues) spans 1160-1169 (VSFQELNRTG). Basic and acidic residues-rich tracts occupy residues 1202 to 1219 (LRGELQESSRKSPSERHV) and 1246 to 1259 (DLEAQCHDQEKSEK). Disordered stretches follow at residues 1202-1282 (LRGE…PKKK), 1384-1414 (RSKSFDCGSITPPQTTPLTELQPPSSPSRVG), and 1523-1548 (SHQSTQLSLQVSTQGSKPDKNSVLSG). Residue T1268 is modified to Phosphothreonine. Low complexity-rich tracts occupy residues 1394–1406 (TPPQTTPLTELQP) and 1523–1536 (SHQSTQLSLQVSTQ). S1735, S1740, S1749, and S1753 each carry phosphoserine. Polar residues predominate over residues 1871–1883 (VRSSPAPSENTHI). The segment at 1871–1911 (VRSSPAPSENTHISPLKCTDNNQERKSPGVKNQGDKVNIQE) is disordered. Phosphoserine occurs at positions 1884 and 2033. 2 C2H2-type zinc fingers span residues 2088 to 2110 (YICEECGIRCKKPSMLKKHIRTH) and 2116 to 2140 (YHCTYCNFSFKTKGNLTKHMKSKAH). 4 disordered regions span residues 2155-2228 (DEQD…PVST), 2265-2303 (SDYNRKTLSPGKARQRAARDENDTIPSVDTSRSPCHQMS), 2327-2381 (SPSS…THLF), and 2572-2718 (PASQ…VIAT). Residues 2164–2175 (EKQRFSYERSGY) show a composition bias toward basic and acidic residues. Residues 2176–2198 (DLEESDGPDEDDNENEDDDEDSQ) are compositionally biased toward acidic residues. Polar residues-rich tracts occupy residues 2199 to 2226 (AESVLSATPSVTASPQHLPSRSSLQDPV) and 2288 to 2300 (TIPSVDTSRSPCH). A phosphoserine mark is found at S2327 and S2599. The span at 2573-2608 (ASQSKACETQPKQTSVASANQVSRTESPQGLPTVQR) shows a compositional bias: polar residues. The span at 2623-2637 (DHARLDGLSKMDTEK) shows a compositional bias: basic and acidic residues. Positions 2651–2663 (TSIQGQPASTSQP) are enriched in polar residues. Phosphoserine occurs at positions 2669 and 2682.

In terms of assembly, interacts with UTP4.

The protein resides in the nucleus. It localises to the cytoplasm. In terms of biological role, this protein specifically binds to the DNA sequence 5'-GGGACTTTCC-3' which is found in the enhancer elements of numerous viral promoters such as those of SV40, CMV, or HIV-1. In addition, related sequences are found in the enhancer elements of a number of cellular promoters, including those of the class I MHC, interleukin-2 receptor, and interferon-beta genes. It may act in T-cell activation. Involved in activating HIV-1 gene expression. Isoform 2 and isoform 3 also bind to the IPCS (IRF1 and p53 common sequence) DNA sequence in the promoter region of interferon regulatory factor 1 and p53 genes and are involved in transcription regulation of these genes. Isoform 2 does not activate HIV-1 gene expression. Isoform 2 and isoform 3 may be involved in apoptosis. This chain is Zinc finger protein 40 (HIVEP1), found in Homo sapiens (Human).